We begin with the raw amino-acid sequence, 179 residues long: Large ribosomal subunit protein uL5 (179 aa).

This sequence belongs to the universal ribosomal protein uL5 family. Part of the 50S ribosomal subunit; part of the 5S rRNA/L5/L18/L25 subcomplex. Contacts the 5S rRNA and the P site tRNA. Forms a bridge to the 30S subunit in the 70S ribosome.

In terms of biological role, this is one of the proteins that bind and probably mediate the attachment of the 5S RNA into the large ribosomal subunit, where it forms part of the central protuberance. In the 70S ribosome it contacts protein S13 of the 30S subunit (bridge B1b), connecting the 2 subunits; this bridge is implicated in subunit movement. Contacts the P site tRNA; the 5S rRNA and some of its associated proteins might help stabilize positioning of ribosome-bound tRNAs. In Vibrio campbellii (strain ATCC BAA-1116), this protein is Large ribosomal subunit protein uL5.